Consider the following 165-residue polypeptide: MISDDTDQFNPRDAKSPEIAKGKSAKRREARQMATQALYQRHMAGHALNEIEAQFRVDNDFSNVDGTYFRELLHGVAINQTEIDTALTPCLDLTIEELDPIELAILRLSTFELLKRIDVPYRVVINEGIELAKVYGSTDGHKFVNGVLDKLAPRLREVEVKAHKR.

The disordered stretch occupies residues 1-27 (MISDDTDQFNPRDAKSPEIAKGKSAKR). The segment covering 10–21 (NPRDAKSPEIAK) has biased composition (basic and acidic residues).

This sequence belongs to the NusB family.

Functionally, involved in transcription antitermination. Required for transcription of ribosomal RNA (rRNA) genes. Binds specifically to the boxA antiterminator sequence of the ribosomal RNA (rrn) operons. This Pseudomonas syringae pv. tomato (strain ATCC BAA-871 / DC3000) protein is Transcription antitermination protein NusB.